The primary structure comprises 316 residues: MSVREKMLEILEGIDIRFQEPXHSYSYTKVGGEADYLVFPRNRFELARVVKFANQENIPWMVLGNASNIIVRDGGIRGFVILCDKLNNVSVDGYTIEAEAGANLIETTRIALRHSLTGFEFACGIPGSVGGAVFMNAGAYGGEIAHILQSCKVLTKDGEIETLSAKDLAFGYRHSAIQESGAVVLSVKFALAPGTHQVIKQEMDRLTHLRELKQPLEYPSCGSXFKRPVGHFAXQLISEXGLKGYRIGGVEVSEKHAGFMINVADGTAKDYEDLIQSVIEKVKEHSGITLEREVRILGESLSVAKMYAGGFTPCKR.

Positions 30–194 constitute an FAD-binding PCMH-type domain; that stretch reads VGGEADYLVF…LSVKFALAPG (165 aa). Arginine 173 is a catalytic residue. Catalysis depends on serine 223, which acts as the Proton donor. Glutamate 293 is an active-site residue.

Belongs to the MurB family. FAD serves as cofactor.

The protein resides in the cytoplasm. The catalysed reaction is UDP-N-acetyl-alpha-D-muramate + NADP(+) = UDP-N-acetyl-3-O-(1-carboxyvinyl)-alpha-D-glucosamine + NADPH + H(+). Its pathway is cell wall biogenesis; peptidoglycan biosynthesis. Cell wall formation. The polypeptide is UDP-N-acetylenolpyruvoylglucosamine reductase (Streptococcus pneumoniae serotype 19F (strain G54)).